Consider the following 305-residue polypeptide: MSRLNVELPGLDLKNPVMPASGCFAFGAEFSQFYDLSELGAIMIKAATKEARYGNETPRVAETDSGMINAIGLQNPGVHHIIEHELKKLEQFDVPIIANVAGSVEEDYVYVAEHISKAPNVKALELNISCPNVKEGGMQFGVDPQVAAELTRKVKAVSEVPVYVKLSPNVTNIVEMAKAIAEYADGLTMINTLVGLRIDGKSGKPIIANTIGGLSGPAIKPVALRMVYEVRKAIDIPIIAMGGVQNAQDVIDYISVGANAVAVGTANFQNPMVCKEIIDELPTLLDKLGVDHINELYGRTHEVMK.

FMN-binding positions include Ser21 and 45–46; that span reads KA. Substrate-binding positions include Lys45 and 69–73; that span reads NAIGL. Residues Asn99 and Asn127 each contribute to the FMN site. Residue Asn127 participates in substrate binding. The Nucleophile role is filled by Cys130. Positions 165 and 190 each coordinate FMN. 191-192 is a substrate binding site; it reads NT. FMN is bound by residues Gly216, 242–243, and 264–265; these read GG and GT.

This sequence belongs to the dihydroorotate dehydrogenase family. Type 1 subfamily. Heterotetramer of 2 PyrK and 2 PyrD type B subunits. It depends on FMN as a cofactor.

The protein resides in the cytoplasm. It catalyses the reaction (S)-dihydroorotate + NAD(+) = orotate + NADH + H(+). It participates in pyrimidine metabolism; UMP biosynthesis via de novo pathway; orotate from (S)-dihydroorotate (NAD(+) route): step 1/1. Functionally, catalyzes the conversion of dihydroorotate to orotate with NAD(+) as electron acceptor. This Staphylococcus carnosus (strain TM300) protein is Dihydroorotate dehydrogenase B (NAD(+)), catalytic subunit (pyrD).